The primary structure comprises 434 residues: MIVRRALALAALALAASPALAAPERPTIVVGSPDFRPLPIAVAAFQGEGDAGAAATQTAEVVRADLVLSGLFDVLDPRGFLADPAEGFAAPSIRFARWADVGADGLAKARVRRGPGGLEGELHLYEVRAGREVLVKLLRVDGADARSLAHRMADEIVRYYTREPGIFATRIAAIRRGRGTWELVTQDMDGGNQQVLLSERSILMSPAWRPDGREILVTSYRSGRPELWAYRFSDRAFRPLGRQRNAFGGVYSPDGSRIAFTVSEGNVTDLWVMSADGSGARKLTSDPAIDVSPTWSPDGRRIAFVSDRSGTPQIYVMGADGSGARRLTFQGNYNQTPQWSPRGDLIAFTARDERKVFDVFVVAPDSGAISRITQDQGRTNEEPSWAPNGRLMIFRTDRNGGIQLVVSDARGDRQTPVTSGKTDLAAPAWGPLAP.

Residues 1–21 (MIVRRALALAALALAASPALA) form the signal peptide. Residues 411–434 (GDRQTPVTSGKTDLAAPAWGPLAP) are disordered.

This sequence belongs to the TolB family. In terms of assembly, the Tol-Pal system is composed of five core proteins: the inner membrane proteins TolA, TolQ and TolR, the periplasmic protein TolB and the outer membrane protein Pal. They form a network linking the inner and outer membranes and the peptidoglycan layer.

The protein localises to the periplasm. Functionally, part of the Tol-Pal system, which plays a role in outer membrane invagination during cell division and is important for maintaining outer membrane integrity. In Anaeromyxobacter dehalogenans (strain 2CP-C), this protein is Tol-Pal system protein TolB.